The sequence spans 304 residues: Aspartate carbamoyltransferase catalytic subunit (304 aa).

Carbamoyl phosphate-binding residues include Arg-49 and Thr-50. L-aspartate is bound at residue Lys-77. Positions 99, 127, and 130 each coordinate carbamoyl phosphate. 2 residues coordinate L-aspartate: Arg-160 and Arg-211. Residues Ala-252 and Pro-253 each coordinate carbamoyl phosphate.

This sequence belongs to the aspartate/ornithine carbamoyltransferase superfamily. ATCase family. In terms of assembly, heterododecamer (2C3:3R2) of six catalytic PyrB chains organized as two trimers (C3), and six regulatory PyrI chains organized as three dimers (R2).

The catalysed reaction is carbamoyl phosphate + L-aspartate = N-carbamoyl-L-aspartate + phosphate + H(+). It participates in pyrimidine metabolism; UMP biosynthesis via de novo pathway; (S)-dihydroorotate from bicarbonate: step 2/3. In terms of biological role, catalyzes the condensation of carbamoyl phosphate and aspartate to form carbamoyl aspartate and inorganic phosphate, the committed step in the de novo pyrimidine nucleotide biosynthesis pathway. This Bacillus cereus (strain ZK / E33L) protein is Aspartate carbamoyltransferase catalytic subunit.